A 553-amino-acid chain; its full sequence is Methyl-coenzyme M reductase subunit alpha (553 aa).

Gln151 is a coenzyme F430 binding site. Residues Arg229, 260-261 (KH), and Arg274 each bind coenzyme B. Residues Tyr336 and Tyr447 each coordinate coenzyme M.

This sequence belongs to the methyl-coenzyme M reductase alpha subunit family. In terms of assembly, MCR is a hexamer of two alpha, two beta, and two gamma chains, forming a dimer of heterotrimers. Requires coenzyme F430 as cofactor.

The protein resides in the cytoplasm. The enzyme catalyses coenzyme B + methyl-coenzyme M = methane + coenzyme M-coenzyme B heterodisulfide. Its pathway is one-carbon metabolism; methyl-coenzyme M reduction; methane from methyl-coenzyme M: step 1/1. Functionally, component of the methyl-coenzyme M reductase (MCR) I that catalyzes the reductive cleavage of methyl-coenzyme M (CoM-S-CH3 or 2-(methylthio)ethanesulfonate) using coenzyme B (CoB or 7-mercaptoheptanoylthreonine phosphate) as reductant which results in the production of methane and the mixed heterodisulfide of CoB and CoM (CoM-S-S-CoB). This is the final step in methanogenesis. In Methanococcus vannielii, this protein is Methyl-coenzyme M reductase subunit alpha (mcrA).